The primary structure comprises 206 residues: MSFFGGNKKTPEQELKDSKRELSKGQREMDRELNRLKIVEQEYIGKIKQLAKAGRNDEAKRMANDLVKLRGQMERMRATKTTLSAVSTKTTTIKANQTMANAMASATKAMSTMNKQTDLVQLQKTMMEYEKQTQRVEMTEEMMQDMFEDDEVDEEADDILSKVVDEVCLDNYQKMPSVAQKDLPYSSKTSTFKTEDEELNKLLQSL.

Positions 1 to 32 (MSFFGGNKKTPEQELKDSKRELSKGQREMDRE) are disordered. A compositionally biased stretch (basic and acidic residues) spans 9–32 (KTPEQELKDSKRELSKGQREMDRE). Coiled-coil stretches lie at residues 12–80 (EQEL…RATK) and 114–148 (NKQT…DMFE).

This sequence belongs to the SNF7 family. Probable core component of the endosomal sorting required for transport complex III (ESCRT-III). ESCRT-III components are thought to multimerize to form a flat lattice on the perimeter membrane of the endosome.

It localises to the endosome membrane. Its function is as follows. Probable core component of the endosomal sorting required for transport complex III (ESCRT-III) which is involved in multivesicular bodies (MVBs) formation and sorting of endosomal cargo proteins into MVBs. MVBs contain intraluminal vesicles (ILVs) that are generated by invagination and scission from the limiting membrane of the endosome and are delivered to lysosomes enabling degradation of membrane proteins. The chain is Charged multivesicular body protein 2a homolog 1 (chmp2a1) from Dictyostelium discoideum (Social amoeba).